The following is a 529-amino-acid chain: Peptide chain release factor 3 (529 aa).

The region spanning 11–280 (SKRRTFAIIS…SLIKWAPSPI (270 aa)) is the tr-type G domain. GTP is bound by residues 20–27 (SHPDAGKT), 88–92 (DTPGH), and 142–145 (NKLD).

Belongs to the TRAFAC class translation factor GTPase superfamily. Classic translation factor GTPase family. PrfC subfamily.

It is found in the cytoplasm. Its function is as follows. Increases the formation of ribosomal termination complexes and stimulates activities of RF-1 and RF-2. It binds guanine nucleotides and has strong preference for UGA stop codons. It may interact directly with the ribosome. The stimulation of RF-1 and RF-2 is significantly reduced by GTP and GDP, but not by GMP. This chain is Peptide chain release factor 3, found in Buchnera aphidicola subsp. Schizaphis graminum (strain Sg).